The sequence spans 223 residues: Adenylate kinase (223 aa).

Position 10–15 (10–15 (GSGKGT)) interacts with ATP. The NMP stretch occupies residues 30-59 (ESGAIFREHIGGGTELGKQAKAFIERGDLV). AMP-binding positions include Ser31, Arg36, 57–59 (DLV), 84–87 (GFPR), and Gln91. The tract at residues 125-164 (GRRLCKNDNNHPNNIFIDAIKPNGDVCRVCGGELSARSDD) is LID. Arg126 contacts ATP. 2 residues coordinate AMP: Arg161 and Arg173. Gly209 is a binding site for ATP.

It belongs to the adenylate kinase family. In terms of assembly, monomer.

It is found in the cytoplasm. It catalyses the reaction AMP + ATP = 2 ADP. It participates in purine metabolism; AMP biosynthesis via salvage pathway; AMP from ADP: step 1/1. In terms of biological role, catalyzes the reversible transfer of the terminal phosphate group between ATP and AMP. Plays an important role in cellular energy homeostasis and in adenine nucleotide metabolism. The protein is Adenylate kinase of Nitratidesulfovibrio vulgaris (strain ATCC 29579 / DSM 644 / CCUG 34227 / NCIMB 8303 / VKM B-1760 / Hildenborough) (Desulfovibrio vulgaris).